The sequence spans 94 residues: Beta-defensin 132 (94 aa).

The signal sequence occupies residues 1–22; sequence MKFLLLVLAALGFLTQVIPASA. 2 cysteine pairs are disulfide-bonded: cysteine 27-cysteine 55 and cysteine 39-cysteine 56. The segment at 72-94 is disordered; it reads GNHWQSRRNTQRKDKKQQTTVTS. Residues 76 to 86 show a composition bias toward basic residues; it reads QSRRNTQRKDK.

This sequence belongs to the beta-defensin family.

The protein resides in the secreted. In terms of biological role, has antibacterial activity. This chain is Beta-defensin 132 (DEFB132), found in Gorilla gorilla gorilla (Western lowland gorilla).